The chain runs to 303 residues: MPWLFWSSGSQRQMSSNENNTDKTTPIVGETNSSSSSTQCANCSTPITTPPTDTSNQVNPPHQTHRPPALDWNASLATRDWAGDFKDPRNLIPTLLLTSGILFCVRIHRKYLRRIPVATSISPTYFHKRSIFGRVTSVGDGDNFRLFHTPGGRLAGWEWLPFRKVPTAKKELKDRTIHIRLAGVDAPELPHFGRPAQPYSDAAHTWLTTYLLNRRVRAYVYRQDQYGRVVATVYVRRWPFPFIRRDVGLQMLRAGLAPVNEAKTGVDFGGEGTGRRLPPRGGKGEEPPEGDLEGEGGFRGGES.

Residues 1-69 are disordered; the sequence is MPWLFWSSGS…PPHQTHRPPA (69 aa). A compositionally biased stretch (polar residues) spans 7–24; sequence SSGSQRQMSSNENNTDKT. Residues 45–54 show a composition bias toward low complexity; it reads TPITTPPTDT. Residues 91-107 traverse the membrane as a helical segment; it reads LIPTLLLTSGILFCVRI. The TNase-like domain maps to 129–290; that stretch reads RSIFGRVTSV…GGKGEEPPEG (162 aa). Arginine 180 is an active-site residue. Aspartate 185 lines the Ca(2+) pocket. Catalysis depends on residues glutamate 188 and arginine 228. Residues 264-303 form a disordered region; it reads TGVDFGGEGTGRRLPPRGGKGEEPPEGDLEGEGGFRGGES.

The protein belongs to the LCL3 family.

It is found in the mitochondrion. Its subcellular location is the membrane. This Ajellomyces dermatitidis (strain ER-3 / ATCC MYA-2586) (Blastomyces dermatitidis) protein is Probable endonuclease LCL3 (LCL3).